The following is an 85-amino-acid chain: Mitochondrial import inner membrane translocase subunit TIM9 (85 aa).

Residues 35 to 59 carry the Twin CX3C motif motif; that stretch reads CFTDCVNDFTSKALSSREESCLEKC. Intrachain disulfides connect C35/C59 and C39/C55.

The protein belongs to the small Tim family. In terms of assembly, heterohexamer; composed of 3 copies of TIM9 and 3 copies of TIM10, named soluble 70 kDa complex. Associates with the TIM22 complex, whose core is composed of TIM22 and TIM54. Interacts with the transmembrane regions of multi-pass transmembrane proteins in transit.

Its subcellular location is the mitochondrion inner membrane. Functionally, mitochondrial intermembrane chaperone that participates in the import and insertion of multi-pass transmembrane proteins into the mitochondrial inner membrane. Also required for the transfer of beta-barrel precursors from the TOM complex to the sorting and assembly machinery (SAM complex) of the outer membrane. Acts as a chaperone-like protein that protects the hydrophobic precursors from aggregation and guide them through the mitochondrial intermembrane space. The sequence is that of Mitochondrial import inner membrane translocase subunit TIM9 (TIM9) from Yarrowia lipolytica (strain CLIB 122 / E 150) (Yeast).